Reading from the N-terminus, the 152-residue chain is SsrA-binding protein (152 aa).

The protein belongs to the SmpB family.

The protein resides in the cytoplasm. Required for rescue of stalled ribosomes mediated by trans-translation. Binds to transfer-messenger RNA (tmRNA), required for stable association of tmRNA with ribosomes. tmRNA and SmpB together mimic tRNA shape, replacing the anticodon stem-loop with SmpB. tmRNA is encoded by the ssrA gene; the 2 termini fold to resemble tRNA(Ala) and it encodes a 'tag peptide', a short internal open reading frame. During trans-translation Ala-aminoacylated tmRNA acts like a tRNA, entering the A-site of stalled ribosomes, displacing the stalled mRNA. The ribosome then switches to translate the ORF on the tmRNA; the nascent peptide is terminated with the 'tag peptide' encoded by the tmRNA and targeted for degradation. The ribosome is freed to recommence translation, which seems to be the essential function of trans-translation. The protein is SsrA-binding protein of Rickettsia peacockii (strain Rustic).